The chain runs to 708 residues: O-antigen chain terminator bifunctional methyltransferase/kinase WbdD (708 aa).

Residues 1–210 (MTKDLNTLVS…VPRPMYLVSN (210 aa)) are methyltransferase. S-adenosyl-L-methionine-binding positions include 16–17 (YQ), R36, G61, 82–87 (DFQQEN), 108–111 (GRIE), and L128. The tract at residues 211–459 (HRVLINDFNQ…AKLPSAEQQR (249 aa)) is kinase. ATP-binding positions include P229, H237, 241-243 (RRY), K252, E274, 309-311 (EKL), M358, and D369. Positions 485–594 (AGSEALRGQI…EIEKIHRSRS (110 aa)) form a coiled coil. The segment at 601–669 (YRYLGLQIHL…RLYRRMNPLP (69 aa)) is required for membrane-binding. Positions 687–708 (VMHPELLPPEVYEIYLKLTKNK) are required for localizing WbdA to the membrane.

The protein belongs to the WbdD family. As to quaternary structure, interacts with WbdA.

It localises to the cell inner membrane. It carries out the reaction 3-O-phospho-alpha-D-Man-(1-&gt;2)-alpha-D-Man-(1-&gt;2)-[alpha-D-Man-(1-&gt;3)-alpha-D-Man-(1-&gt;3)-alpha-D-Man-(1-&gt;2)-alpha-D-Man-(1-&gt;2)](n)-alpha-D-Man-(1-&gt;3)-alpha-D-Man-(1-&gt;3)-alpha-D-Man-(1-&gt;3)-alpha-D-GlcNAc-di-trans,octa-cis-undecaprenyl diphosphate + S-adenosyl-L-methionine = 3-O-methylphospho-alpha-D-Man-(1-&gt;2)-alpha-D-Man-(1-&gt;2)-[alpha-D-Man-(1-&gt;3)-alpha-D-Man-(1-&gt;3)-alpha-D-Man-(1-&gt;2)-alpha-D-Man-(1-&gt;2)](n)-alpha-D-Man-(1-&gt;3)-alpha-D-Man-(1-&gt;3)-alpha-D-Man-(1-&gt;3)-alpha-D-GlcNAc-di-trans,octa-cis-undecaprenyl diphosphate + S-adenosyl-L-homocysteine. The enzyme catalyses alpha-D-Man-(1-&gt;2)-alpha-D-Man-(1-&gt;2)-[alpha-D-Man-(1-&gt;3)-alpha-D-Man-(1-&gt;3)-alpha-D-Man-(1-&gt;2)-alpha-D-Man-(1-&gt;2)](n)-alpha-D-Man-(1-&gt;3)-alpha-D-Man-(1-&gt;3)-alpha-D-Man-(1-&gt;3)-alpha-D-GlcNAc-di-trans,octa-cis-undecaprenyl diphosphate + ATP = 3-O-phospho-alpha-D-Man-(1-&gt;2)-alpha-D-Man-(1-&gt;2)-[alpha-D-Man-(1-&gt;3)-alpha-D-Man-(1-&gt;3)-alpha-D-Man-(1-&gt;2)-alpha-D-Man-(1-&gt;2)](n)-alpha-D-Man-(1-&gt;3)-alpha-D-Man-(1-&gt;3)-alpha-D-Man-(1-&gt;3)-alpha-D-GlcNAc-di-trans,octa-cis-undecaprenyl diphosphate + ADP + H(+). Its pathway is bacterial outer membrane biogenesis; LPS O-antigen biosynthesis. In terms of biological role, regulates the length of the LPS O-antigen polysaccharide chain. Stops the polymerization of the chain by phosphorylating and then methylating the phosphate on the terminal sugar. This terminal modification is essential for export of the O-antigen across the inner membrane. WbdD is also required for correct localization of the WbdA mannosyltransferase. The polypeptide is O-antigen chain terminator bifunctional methyltransferase/kinase WbdD (Escherichia coli).